Consider the following 502-residue polypeptide: Cytochrome P450 71B19 (502 aa).

Residues 1 to 21 (MAISFLCVFLITFVSLIFFAK) traverse the membrane as a helical segment. Residue Cys-444 participates in heme binding.

This sequence belongs to the cytochrome P450 family. It depends on heme as a cofactor.

The protein resides in the membrane. This Arabidopsis thaliana (Mouse-ear cress) protein is Cytochrome P450 71B19 (CYP71B19).